Reading from the N-terminus, the 379-residue chain is UDP-4-amino-4-deoxy-L-arabinose--oxoglutarate aminotransferase (379 aa).

At K182 the chain carries N6-(pyridoxal phosphate)lysine.

It belongs to the DegT/DnrJ/EryC1 family. ArnB subfamily. In terms of assembly, homodimer. Pyridoxal 5'-phosphate serves as cofactor.

It catalyses the reaction UDP-4-amino-4-deoxy-beta-L-arabinose + 2-oxoglutarate = UDP-beta-L-threo-pentopyranos-4-ulose + L-glutamate. It functions in the pathway nucleotide-sugar biosynthesis; UDP-4-deoxy-4-formamido-beta-L-arabinose biosynthesis; UDP-4-deoxy-4-formamido-beta-L-arabinose from UDP-alpha-D-glucuronate: step 2/3. Its pathway is bacterial outer membrane biogenesis; lipopolysaccharide biosynthesis. Its function is as follows. Catalyzes the conversion of UDP-4-keto-arabinose (UDP-Ara4O) to UDP-4-amino-4-deoxy-L-arabinose (UDP-L-Ara4N). The modified arabinose is attached to lipid A and is required for resistance to polymyxin and cationic antimicrobial peptides. In Escherichia coli O1:K1 / APEC, this protein is UDP-4-amino-4-deoxy-L-arabinose--oxoglutarate aminotransferase.